Consider the following 419-residue polypeptide: uncharacterized protein (419 aa).

This is an uncharacterized protein from Schizosaccharomyces pombe (strain 972 / ATCC 24843) (Fission yeast).